The sequence spans 340 residues: Leucine-rich repeat-containing protein 23 (340 aa).

Residues 1–27 show a composition bias toward acidic residues; that stretch reads MSDEDDVDDVDAEQDEVESDKEIEEWE. The disordered stretch occupies residues 1–38; it reads MSDEDDVDDVDAEQDEVESDKEIEEWEDYRKETEEASE. 6 LRR repeats span residues 89–110, 111–134, 177–197, 198–219, 220–241, and 243–264; these read HLRY…NSLT, HLLW…PYLQ, SLHT…IYLP, KLKN…ENLS, NLTT…SQEM, and SLQY…AKLR. Residues 205–340 are interaction with RSPH9; that stretch reads AQNLLKKVEG…QDMEPYLPPV (136 aa). One can recognise an LRRCT domain in the interval 277–315; that stretch reads NPCADETDYRQEALVQMAHLERLDKEFYEDDDRAEAEEI. Residues 305–328 adopt a coiled-coil conformation; the sequence is EDDDRAEAEEIRQRLKEEQDQDLD. The tract at residues 317–340 is disordered; it reads QRLKEEQDQDLDPDQDMEPYLPPV. The span at 323–333 shows a compositional bias: acidic residues; it reads QDQDLDPDQDM.

As to quaternary structure, component of the axonemal radial spoke complex. Interacts with RSPH3A and RSPH3B. Interacts with RSPH9. As to expression, expressed in the testis (at protein level).

It is found in the cytoplasm. It localises to the cytoskeleton. The protein localises to the flagellum axoneme. Functionally, essential for sperm motility and male fertility. Plays an important role in the proper assembly of the third radial spoke (RS3) head and the bridge structure between RS2 and RS3 in the sperm flagella. The chain is Leucine-rich repeat-containing protein 23 (Lrrc23) from Mus musculus (Mouse).